A 422-amino-acid polypeptide reads, in one-letter code: Protein phosphatase methylesterase 1 (422 aa).

A disordered region spans residues 1-27; it reads MSDMFRKSVLNKLPHLPPTRAPWADES. Catalysis depends on residues serine 207, aspartate 234, and histidine 371.

The protein belongs to the AB hydrolase superfamily.

The catalysed reaction is [phosphatase 2A protein]-C-terminal L-leucine methyl ester + H2O = [phosphatase 2A protein]-C-terminal L-leucine + methanol + H(+). Demethylates proteins that have been reversibly carboxymethylated. Demethylates the phosphatase PP2A catalytic subunit. The polypeptide is Protein phosphatase methylesterase 1 (PPE1) (Cryptococcus neoformans var. neoformans serotype D (strain B-3501A) (Filobasidiella neoformans)).